The chain runs to 492 residues: Catalase-3 (492 aa).

Residues H65 and N138 contribute to the active site. Y348 lines the heme pocket.

Belongs to the catalase family. In terms of assembly, homotetramer and heterotetramer. At least six or seven isozymes are produced from a mixture of 3 gene products. Interacts with NCA1. Interacts with LSD1. Heme is required as a cofactor.

The protein localises to the peroxisome. It carries out the reaction 2 H2O2 = O2 + 2 H2O. Occurs in almost all aerobically respiring organisms and serves to protect cells from the toxic effects of hydrogen peroxide. The chain is Catalase-3 (CAT3) from Arabidopsis thaliana (Mouse-ear cress).